Consider the following 135-residue polypeptide: Large ribosomal subunit protein uL16c (135 aa).

The protein belongs to the universal ribosomal protein uL16 family. Part of the 50S ribosomal subunit.

The protein resides in the plastid. It localises to the chloroplast. This is Large ribosomal subunit protein uL16c from Cucumis sativus (Cucumber).